Reading from the N-terminus, the 260-residue chain is Hydroxyethylthiazole kinase 2 (260 aa).

Met-40 serves as a coordination point for substrate. Residues Arg-116 and Thr-161 each contribute to the ATP site. Ala-188 lines the substrate pocket.

It belongs to the Thz kinase family. It depends on Mg(2+) as a cofactor.

It carries out the reaction 5-(2-hydroxyethyl)-4-methylthiazole + ATP = 4-methyl-5-(2-phosphooxyethyl)-thiazole + ADP + H(+). The protein operates within cofactor biosynthesis; thiamine diphosphate biosynthesis; 4-methyl-5-(2-phosphoethyl)-thiazole from 5-(2-hydroxyethyl)-4-methylthiazole: step 1/1. Catalyzes the phosphorylation of the hydroxyl group of 4-methyl-5-beta-hydroxyethylthiazole (THZ). In Oceanobacillus iheyensis (strain DSM 14371 / CIP 107618 / JCM 11309 / KCTC 3954 / HTE831), this protein is Hydroxyethylthiazole kinase 2.